A 913-amino-acid chain; its full sequence is Glutamate receptor ionotropic, kainate 2 (913 aa).

The Extracellular segment spans residues 1–566; it reads MCAGTMKIIS…VFSFLNPLSP (566 aa). Asn-72, Asn-78, Asn-280, Asn-383, Asn-417, Asn-428, and Asn-435 each carry an N-linked (GlcNAc...) asparagine glycan. Cys-101 and Cys-352 form a disulfide bridge. 3 residues coordinate L-glutamate: Pro-521, Ala-523, and Arg-528. Asn-551 carries an N-linked (GlcNAc...) asparagine glycan. The helical transmembrane segment at 567–587 threads the bilayer; that stretch reads DIWMYILLAYLGVSCVLFVIA. The Cytoplasmic segment spans residues 588–643; it reads RFSPYEWYNPHPCNPDSDVVENNFTLLNSFWFGVGALMQQGSELMPKALSTRIVGG. The chain crosses the membrane as a helical span at residues 644 to 664; it reads IWWFFTLIIISSYTANLAAFL. At 665-824 the chain is on the extracellular side; sequence TVERMESPID…KEASALGVQN (160 aa). 3 residues coordinate L-glutamate: Ala-694, Thr-695, and Glu-743. Cys-755 and Cys-809 are joined by a disulfide. An N-linked (GlcNAc...) asparagine glycan is attached at Asn-756. Residues 825-845 form a helical membrane-spanning segment; that stretch reads IGGIFIVLAAGLVLSVFVAVG. Residues 846-913 lie on the Cytoplasmic side of the membrane; it reads EFLYKSKKNA…RRLPGKETMA (68 aa).

This sequence belongs to the glutamate-gated ion channel (TC 1.A.10.1) family. GRIK2 subfamily. As to quaternary structure, homotetramer and heterotetramer with GRIK5. Tetramers may be formed by the dimerization of dimers.

Its subcellular location is the cell membrane. The protein resides in the postsynaptic cell membrane. The catalysed reaction is Ca(2+)(in) = Ca(2+)(out). It carries out the reaction Na(+)(in) = Na(+)(out). Cold receptor activity activated by temperatures between 10-19 degrees Celsius. Functionally, ionotropic glutamate receptor that functions as a cation-permeable ligand-gated ion channel, gated by L-glutamate and the glutamatergic agonist kainic acid. L-glutamate acts as an excitatory neurotransmitter at many synapses in the central nervous system. Binding of the excitatory neurotransmitter L-glutamate induces a conformation change, leading to the opening of the cation channel, and thereby converts the chemical signal to an electrical impulse. The receptor then desensitizes rapidly and enters a transient inactive state, characterized by the presence of bound agonist. Independent of its ionotropic glutamate receptor activity, acts as a thermoreceptor conferring sensitivity to cold temperatures. Functions in dorsal root ganglion neurons. The protein is Glutamate receptor ionotropic, kainate 2 (grik2) of Xenopus laevis (African clawed frog).